Reading from the N-terminus, the 208-residue chain is Large ribosomal subunit protein bL25 (208 aa).

Residues 1 to 20 (MANHQIKAQRRKDEGKGASR) are disordered.

It belongs to the bacterial ribosomal protein bL25 family. CTC subfamily. Part of the 50S ribosomal subunit; part of the 5S rRNA/L5/L18/L25 subcomplex. Contacts the 5S rRNA. Binds to the 5S rRNA independently of L5 and L18.

Its function is as follows. This is one of the proteins that binds to the 5S RNA in the ribosome where it forms part of the central protuberance. In Xylella fastidiosa (strain 9a5c), this protein is Large ribosomal subunit protein bL25.